The chain runs to 526 residues: Clostripain (526 aa).

The N-terminal stretch at 1 to 27 (MLRRKVSTLLMTALITTSFLNSKPVYA) is a signal peptide. The propeptide occupies 28 to 50 (NPVTKSKDNNLKEVQQVTSKSNK). The propeptide at 182–190 (EKSNPRLNR) is linker. Cysteine 231 (nucleophile) is an active-site residue.

It belongs to the peptidase C11 family. In terms of assembly, heterodimer of a light chain and a heavy chain held together by strong non-covalent forces rather than by intramolecular disulfide bridges.

The catalysed reaction is Preferential cleavage: Arg-|-Xaa, including Arg-|-Pro bond, but not Lys-|-Xaa.. In terms of biological role, cysteine endopeptidase with strict specificity. This is Clostripain (cloSI) from Hathewaya histolytica (Clostridium histolyticum).